The following is a 334-amino-acid chain: MAFRVLMVGKGLRALAARGLFDGESLVPVGPAEVDFAGALVAVQRHFPDVVLVDLSALDALPAIEHVMVERPVPVLALHPGVLSGQEAFQAMVAGALDVLERPANPGPEFWTHVSRKLVLLAQVKAVRQVQTRPPPQAAREAKPPPPYPLVAIAASLGGPKAVAQVLRMIPRAFPAPIAYCQHISDGFTEGLAHWLSNETALRVLEAEHDVLMAPGTVYIAPSGSHLLVRPEGRLELDAGPALRGFRPSCDMLLTSAGESFGPRCIGVILTGMGRDGARGLKEIRERGGRTIAQDEASSVVWGMPREAVLMGAAHEVLPLSRIGAALMQWVDVC.

Positions 147–334 constitute a CheB-type methylesterase domain; sequence PYPLVAIAAS…AALMQWVDVC (188 aa). Active-site residues include S156, H183, and D276.

The catalysed reaction is [protein]-L-glutamate 5-O-methyl ester + H2O = L-glutamyl-[protein] + methanol + H(+). Probable methylesterase. Required for the normal aggregation of M.xanthus cells during fruiting body formation. It is also a component of a sensory transduction pathway that controls the frequency at which cells reverse their gliding direction. It may remove the methyl group from the gamma-glutamyl methyl ester residues in FrzCD. In Myxococcus xanthus, this protein is Protein-glutamate methylesterase FrzG (frzG).